A 772-amino-acid polypeptide reads, in one-letter code: Mitochondrial intermediate peptidase (772 aa).

A mitochondrion-targeting transit peptide spans 1 to 37 (MLRTIILKAGSNASIPSLSRQNKLLRFFATAGAVSRT). His-558 is a binding site for Zn(2+). Glu-559 is an active-site residue. His-562 and His-565 together coordinate Zn(2+).

The protein belongs to the peptidase M3 family. It depends on Zn(2+) as a cofactor.

Its subcellular location is the mitochondrion matrix. It catalyses the reaction Release of an N-terminal octapeptide as second stage of processing of some proteins imported into the mitochondrion.. Stimulated by Fe(2+). Cleaves proteins, imported into the mitochondrion, to their mature size. While most mitochondrial precursor proteins are processed to the mature form in one step by mitochondrial processing peptidase (MPP), the sequential cleavage by MIP of an octapeptide after initial processing by MPP is a required step for a subgroup of nuclear-encoded precursor proteins destined for the matrix or the inner membrane. Cleaves precursor proteins of respiratory components, including subunits of the electron transport chain and tricarboxylic acid cycle enzymes, and components of the mitochondrial genetic machinery, including ribosomal proteins, translation factors, and proteins required for mitochondrial DNA metabolism. The chain is Mitochondrial intermediate peptidase (OCT1) from Saccharomyces cerevisiae (strain YJM789) (Baker's yeast).